We begin with the raw amino-acid sequence, 146 residues long: VHWTAEEKQLITCLWGKVDVPTVGADALAGMLVMYPWTQRFFADFGNLSSATAICGNPKVRAHGKKVLTAFGDAIKNLDNIKDTFAKLSELHCDKLHVDPENFKLLGNVLIIVLAGHYGKDFTPACHAAYQKLVNVVAHALARRYH.

The Globin domain occupies 2–146 (HWTAEEKQLI…VAHALARRYH (145 aa)). Heme b is bound by residues histidine 63 and histidine 92.

Belongs to the globin family. In terms of assembly, heterotetramer of two alpha chains and two beta chains. As to expression, red blood cells.

Involved in oxygen transport from the lung to the various peripheral tissues. The sequence is that of Hemoglobin subunit beta-2 from Iguana iguana (Common iguana).